We begin with the raw amino-acid sequence, 112 residues long: Protein preY, mitochondrial (112 aa).

The transit peptide at 1 to 34 (MLSATCRRLAPALRRLRALSAVAGRFLQVPGARL) directs the protein to the mitochondrion. Residues 49–95 (HPALLQFLVCPLSKKPLRYEASTNELVNEELGIAYPIIDGIPNMIPQ) enclose the TRM112 domain.

It belongs to the PREY family. In terms of assembly, interacts (via TRM112 domain) with NDUFAF5; the interaction is direct and stabilizes NDUFAF5 protein. Interacts with COQ5; the interaction is direct, stabilizes COQ5 protein and associates PYURF with COQ enzyme complex.

It localises to the mitochondrion. In terms of biological role, in mitochondria, S-adenosylmethionine-dependent methyltransferase chaperone that supports both coenzyme Q biosynthesis, by stabilizing its components, such as COQ5, and NADH:ubiquinone oxidoreductase complex (complex I, MT-ND1) assembly, by stabilizing complex I assembly factors, such as NDUFAF5. In Mus musculus (Mouse), this protein is Protein preY, mitochondrial (Pyurf).